The following is an 832-amino-acid chain: Protein monoglycylase TTLL8 (832 aa).

Residues 1–13 show a composition bias toward pro residues; the sequence is MSCPPTPNPPFRP. Disordered stretches follow at residues 1 to 84 and 277 to 304; these read MSCP…QDLS and GKSKKEEAKNSDPSPKKDPENPDLKLPS. 3 stretches are compositionally biased toward basic and acidic residues: residues 46-59, 66-75, and 280-299; these read QLREASMENGERKK, DGDHKEENKL, and KKEEAKNSDPSPKKDPENPD. Residues 271–624 enclose the TTL domain; that stretch reads YCSKVKGKSK…RKLDRNCDIG (354 aa). Residues Lys397, 403–404, 435–438, 448–450, and 492–493 each bind ATP; these read RG, QKYI, KFD, and CN. Arg403 provides a ligand contact to a protein. Ser495 serves as a coordination point for L-glutamate. Mg(2+) is bound by residues Asp570, Glu583, and Asn585. Glu583 contacts ATP.

Mg(2+) serves as cofactor. Highly expressed in testis. Expressed in brain, heart, kidney, liver, lung, muscle, spleen and trachea. Expressed in sperm flagellum. In the brain, specifically expressed in ependymal cilia.

Its subcellular location is the cytoplasm. It is found in the cytoskeleton. The protein resides in the cell projection. It localises to the cilium. The protein localises to the cilium axoneme. Its subcellular location is the flagellum axoneme. It catalyses the reaction L-glutamyl-[protein] + glycine + ATP = glycyl-L-glutamyl-[protein] + ADP + phosphate + H(+). Monoglycylase which modifies both tubulin and non-tubulin proteins, adding a single glycine on the gamma-carboxyl groups of specific glutamate residues to generate monoglycine side chains within the C-terminal tail of target proteins. Not involved in elongation step of the polyglycylation reaction. Preferentially monoglycylates alpha-tubulin over beta-tubulin. Together with TTLL3, mediates microtubule glycylation of primary and motile cilia, which is essential for their stability and maintenance. Together with TTLL3, glycylates sperm flagella which regulates axonemal dynein motor activity, thereby controlling flagellar beat, directional sperm swimming and male fertility. Monoglycylates non-tubulin proteins such as ANP32A, ANP32B, SET, NCL and NAP1. In Mus musculus (Mouse), this protein is Protein monoglycylase TTLL8.